A 120-amino-acid polypeptide reads, in one-letter code: Aspartate 1-decarboxylase (120 aa).

Residue serine 25 is the Schiff-base intermediate with substrate; via pyruvic acid of the active site. Serine 25 carries the post-translational modification Pyruvic acid (Ser). Residue threonine 57 participates in substrate binding. Tyrosine 58 functions as the Proton donor in the catalytic mechanism. Position 73–75 (73–75 (GAA)) interacts with substrate.

Belongs to the PanD family. Heterooctamer of four alpha and four beta subunits. Requires pyruvate as cofactor. Is synthesized initially as an inactive proenzyme, which is activated by self-cleavage at a specific serine bond to produce a beta-subunit with a hydroxyl group at its C-terminus and an alpha-subunit with a pyruvoyl group at its N-terminus.

The protein localises to the cytoplasm. It catalyses the reaction L-aspartate + H(+) = beta-alanine + CO2. Its pathway is cofactor biosynthesis; (R)-pantothenate biosynthesis; beta-alanine from L-aspartate: step 1/1. Its function is as follows. Catalyzes the pyruvoyl-dependent decarboxylation of aspartate to produce beta-alanine. This is Aspartate 1-decarboxylase from Polynucleobacter asymbioticus (strain DSM 18221 / CIP 109841 / QLW-P1DMWA-1) (Polynucleobacter necessarius subsp. asymbioticus).